The sequence spans 504 residues: Outer capsid protein VP5 (504 aa).

Residues methionine 1–glutamate 42 are involved in membrane permeabilization.

Belongs to the orbivirus VP5 family.

It localises to the virion. In terms of biological role, VP5 protein is one of the two proteins (with VP2) which constitute the virus particle outer capsid. Acts as a membrane permeabilization protein that mediates release of viral particles from endosomal compartments into the cytoplasm. Permeabilization activity is probably negatively regulated by VP2 and is triggered by endosomal degradation of VP2 and exposure to low pH. The polypeptide is Outer capsid protein VP5 (Segment-6) (African horse sickness virus 6 (AHSV-6)).